The primary structure comprises 258 residues: UPF0246 protein HI_0984 (258 aa).

It belongs to the UPF0246 family.

This Haemophilus influenzae (strain ATCC 51907 / DSM 11121 / KW20 / Rd) protein is UPF0246 protein HI_0984.